The sequence spans 350 residues: DNA primase small subunit PriS (350 aa).

Residues D97, D99, and D251 contribute to the active site.

The protein belongs to the eukaryotic-type primase small subunit family. As to quaternary structure, heterodimer of a small subunit (PriS) and a large subunit (PriL). Requires Mg(2+) as cofactor. Mn(2+) serves as cofactor. Zn(2+) is required as a cofactor.

Catalytic subunit of DNA primase, an RNA polymerase that catalyzes the synthesis of short RNA molecules used as primers for DNA polymerase during DNA replication. The small subunit contains the primase catalytic core and has DNA synthesis activity on its own. Binding to the large subunit stabilizes and modulates the activity, increasing the rate of DNA synthesis while decreasing the length of the DNA fragments, and conferring RNA synthesis capability. The DNA polymerase activity may enable DNA primase to also catalyze primer extension after primer synthesis. May also play a role in DNA repair. In Methanocaldococcus jannaschii (strain ATCC 43067 / DSM 2661 / JAL-1 / JCM 10045 / NBRC 100440) (Methanococcus jannaschii), this protein is DNA primase small subunit PriS.